The chain runs to 218 residues: NAD(P)H-quinone oxidoreductase subunit I (218 aa).

2 consecutive 4Fe-4S ferredoxin-type domains span residues 55–84 (GRIH…VDWV) and 95–124 (RNYS…MTEE). The [4Fe-4S] cluster site is built by cysteine 64, cysteine 67, cysteine 70, cysteine 74, cysteine 104, cysteine 107, cysteine 110, and cysteine 114. The segment at 168-218 (EVQPHGVDPSRPRAGQRPDQVLSSLKQNAGGSAGNEGESATSTNTSKGSAE) is disordered. Polar residues predominate over residues 208 to 218 (TSTNTSKGSAE).

It belongs to the complex I 23 kDa subunit family. NDH-1 is composed of at least 11 different subunits. It depends on [4Fe-4S] cluster as a cofactor.

The protein localises to the cellular thylakoid membrane. It catalyses the reaction a plastoquinone + NADH + (n+1) H(+)(in) = a plastoquinol + NAD(+) + n H(+)(out). The enzyme catalyses a plastoquinone + NADPH + (n+1) H(+)(in) = a plastoquinol + NADP(+) + n H(+)(out). Functionally, NDH-1 shuttles electrons from an unknown electron donor, via FMN and iron-sulfur (Fe-S) centers, to quinones in the respiratory and/or the photosynthetic chain. The immediate electron acceptor for the enzyme in this species is believed to be plastoquinone. Couples the redox reaction to proton translocation, and thus conserves the redox energy in a proton gradient. The polypeptide is NAD(P)H-quinone oxidoreductase subunit I (Synechococcus sp. (strain WH7803)).